A 219-amino-acid chain; its full sequence is Ribose-5-phosphate isomerase A (219 aa).

Substrate-binding positions include 28–31, 81–84, and 94–97; these read SGST, DGAD, and KGGG. Residue glutamate 103 is the Proton acceptor of the active site. A substrate-binding site is contributed by lysine 121.

It belongs to the ribose 5-phosphate isomerase family. As to quaternary structure, homodimer.

It carries out the reaction aldehydo-D-ribose 5-phosphate = D-ribulose 5-phosphate. Its pathway is carbohydrate degradation; pentose phosphate pathway; D-ribose 5-phosphate from D-ribulose 5-phosphate (non-oxidative stage): step 1/1. Catalyzes the reversible conversion of ribose-5-phosphate to ribulose 5-phosphate. This chain is Ribose-5-phosphate isomerase A, found in Histophilus somni (strain 2336) (Haemophilus somnus).